Here is a 430-residue protein sequence, read N- to C-terminus: DD-carboxypeptidase/endopeptidase Mpg (430 aa).

3 residues coordinate Zn(2+): H295, D299, and H375.

This sequence belongs to the peptidase M23B family. As to quaternary structure, monomer. Requires Zn(2+) as cofactor. In terms of processing, likely to be synthesized as a proenzyme. The cleavage of the N-terminal domain is probably required for the activation of the enzyme.

It localises to the cell outer membrane. In terms of biological role, has both endopeptidase and DD-carboxypeptidase activities. Degrades cell wall peptidoglycan (PG) to allow consummate expression of pili. The polypeptide is DD-carboxypeptidase/endopeptidase Mpg (Neisseria meningitidis serogroup B (strain ATCC 13091 / M2091)).